Here is a 70-residue protein sequence, read N- to C-terminus: Small, acid-soluble spore protein 1 (70 aa).

Belongs to the alpha/beta-type SASP family.

In terms of biological role, SASP are bound to spore DNA. They are double-stranded DNA-binding proteins that cause DNA to change to an a-like conformation. They protect the DNA backbone from chemical and enzymatic cleavage and are thus involved in dormant spore's high resistance to UV light. The chain is Small, acid-soluble spore protein 1 (sasP-1) from Geobacillus stearothermophilus (Bacillus stearothermophilus).